We begin with the raw amino-acid sequence, 169 residues long: Monothiol glutaredoxin-S15, mitochondrial (169 aa).

A mitochondrion-targeting transit peptide spans 1–37; that stretch reads MAASLSSRLIKGIANLKAVRSSRLTSASVYQNGMMRF. The tract at residues 38–61 is disordered; that stretch reads SSTVPSDSDTHDDFKPTQKVPPDS. The Glutaredoxin domain maps to 66 to 168; it reads KDIVENDVKD…QKLKDVSGNQ (103 aa). Glutathione is bound at residue Lys83. Cys91 provides a ligand contact to [2Fe-2S] cluster. Residues Lys120, Phe132, and 145–146 each bind glutathione; that span reads SD.

Belongs to the glutaredoxin family. CGFS subfamily. [2Fe-2S]-bridged holo-homodimer. Interacts in vitro with SUFE1, BOLA1, BOLA2 and BOLA4. Interacts in vivo only with BOLA4.

The protein localises to the mitochondrion. Its function is as follows. May only reduce GSH-thiol disulfides, but not protein disulfides. Participates probably to the maturation of iron-sulfur proteins and to the regulation of the redox state of the BOLA proteins. The protein is Monothiol glutaredoxin-S15, mitochondrial of Arabidopsis thaliana (Mouse-ear cress).